Consider the following 556-residue polypeptide: MKTDIEIAQSIELKPIVDVVEKLGISYDDLELYGKYKAKLSFDKIRAVESNPVGKLILVTAINPTPAGEGKSTLTIGLADALNKIGKKTMIAIREPSLGPVMGIKGGAAGGGYAQVLPMEDINLHFTGDMHAITTANNALSALIDNHLHQGNELGIDQRRILWKRVVDLNDRALRHVTVGLGGPLNGIPREDGFDITVASEIMAILCLATDIEDLKRRLANIVIGYRYDRTPVSVGDLQVEGALALILKDAIKPNLVQTIYGTPAFVHGGPFANIAHGCNSVLATTTALHLADYTVTEAGFGADLGAEKFLDIKTPNLPTSPDAVVIVATLRALKMNGGVAKDALTEENVEAVRAGFANLKRHVENIRKFGIPAVVAINEFVSDTEAEIAALKELCALIDVPVELASVWADGVEGGVELAETVVKTIAENPANYKRLYDNDLSVQEKIEKIVTEIYRGSKVNFEKKAQTQIAQVVQNGWDKLPICMAKTQYSFSDNPNALGAPENFEITIRELVPKLGAGFIVALTGDVMTMPGLPKRPAALNMDVESDGTVLGLF.

Position 65 to 72 (65 to 72 (TPAGEGKS)) interacts with ATP.

It belongs to the formate--tetrahydrofolate ligase family.

It carries out the reaction (6S)-5,6,7,8-tetrahydrofolate + formate + ATP = (6R)-10-formyltetrahydrofolate + ADP + phosphate. It functions in the pathway one-carbon metabolism; tetrahydrofolate interconversion. This is Formate--tetrahydrofolate ligase from Streptococcus pneumoniae serotype 19F (strain G54).